Consider the following 686-residue polypeptide: Bromodomain-containing factor 1 (686 aa).

Disordered regions lie at residues 1 to 69 (MTDI…PAGL) and 85 to 150 (NGYN…NPIP). Over residues 9–25 (NDVDVNGNNVNDDVSSN) the composition is skewed to low complexity. Residues 99–120 (QGLKKEEGGQGTKQEDLDENSK) show a composition bias toward basic and acidic residues. Over residues 130 to 139 (EPAPAPPPEP) the composition is skewed to pro residues. The Bromo 1 domain occupies 145–254 (PQNPIPKHQQ…ASFEKHMLNM (110 aa)). At Ser270 the chain carries Phosphoserine. Residues 283-304 (QTHNGRPKRTIHPPKSKDIYPY) are disordered. The segment covering 287-296 (GRPKRTIHPP) has biased composition (basic residues). One can recognise a Bromo 2 domain in the interval 312 to 421 (KRLQQAMKFC…EVFNSKWADR (110 aa)). Disordered regions lie at residues 424 to 447 (LDDY…SEYS), 486 to 523 (IRKE…KKNK), 594 to 636 (SSGA…EQSR), and 649 to 686 (DSAS…SEEE). At Ser429 the chain carries Phosphoserine. A compositionally biased stretch (acidic residues) spans 438-447 (DYDDYESEYS). Residues 460–499 (AIQYLEEQLARMKVELQQLKKQELEKIRKERRLARGSKKR) adopt a coiled-coil conformation. The segment covering 488–507 (KERRLARGSKKRGKRSKGRS) has biased composition (basic residues). Positions 518-598 (RDKKNKLKTV…RQYESSSGAS (81 aa)) constitute an NET domain. 2 stretches are compositionally biased toward polar residues: residues 594-620 (SSGA…TSAG) and 652-671 (SPLS…HNGF). Phosphoserine is present on residues Ser615 and Ser659. The span at 675 to 686 (SDDDVSSESEEE) shows a compositional bias: acidic residues.

The protein belongs to the BET family. As to quaternary structure, interacts with the TFIID subunit TAF7 and with acetylated histones H3 and H4. In terms of processing, phosphorylated by the casein kinase CK2 complex.

The protein localises to the nucleus. Its function is as follows. Transcription factor involved in the expression of a broad class of genes including snRNAs. Required for sporulation and DNA-damage repair. Prevents the spreading of SIR silencing at telomeres and protects histone H4, but not H3, from deacetylation. The sequence is that of Bromodomain-containing factor 1 (BDF1) from Saccharomyces cerevisiae (strain ATCC 204508 / S288c) (Baker's yeast).